The chain runs to 240 residues: Ribitol-5-phosphate cytidylyltransferase (240 aa).

CTP-binding positions include 8–11 (FAGG) and 81–87 (GETGQMS).

This sequence belongs to the IspD/TarI cytidylyltransferase family. TarI subfamily.

The catalysed reaction is D-ribitol 5-phosphate + CTP + H(+) = CDP-L-ribitol + diphosphate. It participates in cell wall biogenesis; poly(ribitol phosphate) teichoic acid biosynthesis. In terms of biological role, catalyzes the transfer of the cytidylyl group of CTP to D-ribitol 5-phosphate. This is Ribitol-5-phosphate cytidylyltransferase from Streptococcus agalactiae serotype V (strain ATCC BAA-611 / 2603 V/R).